Here is a 201-residue protein sequence, read N- to C-terminus: Small ribosomal subunit protein uS5 (201 aa).

The disordered stretch occupies residues 1–28; it reads MAGPQRRGSGAGGGERRDRKGRDGGASA. Basic and acidic residues predominate over residues 14-23; it reads GERRDRKGRD. An S5 DRBM domain is found at 34–97; the sequence is YVERVVAINR…EEAKKNFFKV (64 aa).

The protein belongs to the universal ribosomal protein uS5 family. As to quaternary structure, part of the 30S ribosomal subunit. Contacts proteins S4 and S8.

Its function is as follows. With S4 and S12 plays an important role in translational accuracy. Located at the back of the 30S subunit body where it stabilizes the conformation of the head with respect to the body. In Streptomyces griseus subsp. griseus (strain JCM 4626 / CBS 651.72 / NBRC 13350 / KCC S-0626 / ISP 5235), this protein is Small ribosomal subunit protein uS5.